Here is a 144-residue protein sequence, read N- to C-terminus: Conopressin-conophysin (144 aa).

The signal sequence occupies residues M1 to A27. Residues C28 and C33 are joined by a disulfide bond. The residue at position 36 (D36) is an Aspartic acid 1-amide. A propeptide spanning residues G37 to R44 is cleaved from the precursor. 7 cysteine pairs are disulfide-bonded: C50-C90, C53-C64, C58-C80, C65-C70, C97-C117, C109-C129, and C118-C123. Positions K131–S144 are excised as a propeptide.

This sequence belongs to the vasopressin/oxytocin family. As to expression, expressed by the venom duct.

It localises to the secreted. The protein is Conopressin-conophysin of Conus bayani (Bayan's cone).